Here is a 229-residue protein sequence, read N- to C-terminus: Ribosomal RNA small subunit methyltransferase G (229 aa).

S-adenosyl-L-methionine-binding positions include Gly71, 122-123 (AE), and Arg139.

Belongs to the methyltransferase superfamily. RNA methyltransferase RsmG family.

The protein localises to the cytoplasm. Functionally, specifically methylates the N7 position of a guanine in 16S rRNA. The sequence is that of Ribosomal RNA small subunit methyltransferase G from Thermotoga neapolitana (strain ATCC 49049 / DSM 4359 / NBRC 107923 / NS-E).